Reading from the N-terminus, the 471-residue chain is D-hydantoinase (471 aa).

Zn(2+) is bound by residues H58, H60, and K150. The residue at position 150 (K150) is an N6-carboxylysine. Y155 contributes to the substrate binding site. Zn(2+)-binding residues include H183 and H239. Position 288 (S288) interacts with substrate. Zn(2+) is bound at residue D315. Substrate is bound at residue N337.

Belongs to the metallo-dependent hydrolases superfamily. Hydantoinase/dihydropyrimidinase family. As to quaternary structure, homotetramer. Requires Zn(2+) as cofactor. It depends on Ni(2+) as a cofactor. Co(2+) serves as cofactor. Mn(2+) is required as a cofactor. Carboxylation allows a single lysine to coordinate two zinc ions.

Completely inhibited by p-chloromercuribenzoate and partially inhibited by metal chelating agents. Its function is as follows. Catalyzes the stereospecific hydrolysis of the cyclic amide bond of D-hydantoin. Has no activity on dihydropyrimidines. The protein is D-hydantoinase of Geobacillus stearothermophilus (Bacillus stearothermophilus).